We begin with the raw amino-acid sequence, 380 residues long: Cytochrome b (380 aa).

Transmembrane regions (helical) follow at residues 34–54 (FGSL…LLAA), 78–99 (WLIR…YLHI), 114–134 (WNTG…GYVL), and 179–199 (FFAL…IHLA). Residues histidine 84 and histidine 98 each coordinate heme b. Heme b is bound by residues histidine 183 and histidine 197. Histidine 202 lines the a ubiquinone pocket. The next 4 membrane-spanning stretches (helical) occupy residues 227-247 (LKDI…ALFS), 289-309 (LGGV…PLLH), 321-341 (LSQL…WIGS), and 348-368 (FIII…ILFP).

It belongs to the cytochrome b family. In terms of assembly, the cytochrome bc1 complex contains 11 subunits: 3 respiratory subunits (MT-CYB, CYC1 and UQCRFS1), 2 core proteins (UQCRC1 and UQCRC2) and 6 low-molecular weight proteins (UQCRH/QCR6, UQCRB/QCR7, UQCRQ/QCR8, UQCR10/QCR9, UQCR11/QCR10 and a cleavage product of UQCRFS1). This cytochrome bc1 complex then forms a dimer. Requires heme b as cofactor.

It is found in the mitochondrion inner membrane. Functionally, component of the ubiquinol-cytochrome c reductase complex (complex III or cytochrome b-c1 complex) that is part of the mitochondrial respiratory chain. The b-c1 complex mediates electron transfer from ubiquinol to cytochrome c. Contributes to the generation of a proton gradient across the mitochondrial membrane that is then used for ATP synthesis. This chain is Cytochrome b (MT-CYB), found in Cyrtonyx montezumae (Montezuma quail).